We begin with the raw amino-acid sequence, 875 residues long: Alanine--tRNA ligase (875 aa).

Histidine 567, histidine 571, cysteine 669, and histidine 673 together coordinate Zn(2+).

It belongs to the class-II aminoacyl-tRNA synthetase family. The cofactor is Zn(2+).

The protein localises to the cytoplasm. It carries out the reaction tRNA(Ala) + L-alanine + ATP = L-alanyl-tRNA(Ala) + AMP + diphosphate. Functionally, catalyzes the attachment of alanine to tRNA(Ala) in a two-step reaction: alanine is first activated by ATP to form Ala-AMP and then transferred to the acceptor end of tRNA(Ala). Also edits incorrectly charged Ser-tRNA(Ala) and Gly-tRNA(Ala) via its editing domain. This Geobacter sulfurreducens (strain ATCC 51573 / DSM 12127 / PCA) protein is Alanine--tRNA ligase.